We begin with the raw amino-acid sequence, 219 residues long: Probable GTP-binding protein EngB (219 aa).

One can recognise an EngB-type G domain in the interval 24–207 (VQPEVAFAGR…HALIESWVRP (184 aa)). Residues 32-39 (GRSNAGKS), 59-63 (GRTQH), 81-84 (DLPG), 148-151 (TKCD), and 185-188 (LFSA) each bind GTP. Positions 39 and 61 each coordinate Mg(2+).

Belongs to the TRAFAC class TrmE-Era-EngA-EngB-Septin-like GTPase superfamily. EngB GTPase family. It depends on Mg(2+) as a cofactor.

Its function is as follows. Necessary for normal cell division and for the maintenance of normal septation. The polypeptide is Probable GTP-binding protein EngB (Burkholderia mallei (strain ATCC 23344)).